A 147-amino-acid polypeptide reads, in one-letter code: Hemoglobin subunit beta-2 (147 aa).

Residues glutamate 3–histidine 147 enclose the Globin domain. Histidine 64 and histidine 93 together coordinate heme b.

It belongs to the globin family. In terms of assembly, hb 3 is a heterotetramer of two alpha-2 and two beta-2 chains. In terms of tissue distribution, red blood cells.

Involved in oxygen transport from gills to the various peripheral tissues. This chain is Hemoglobin subunit beta-2 (hbb2), found in Boreogadus saida (Polar cod).